Reading from the N-terminus, the 630-residue chain is SHC-transforming protein 4 (630 aa).

A CH2 region spans residues 1 to 185 (MRERGQDSLA…RQDRHFLQHL (185 aa)). Disordered regions lie at residues 39 to 80 (TSLD…QESP) and 118 to 150 (KLQE…QQDL). The segment covering 125–142 (PGSSGPSSPETSLSRSGT) has biased composition (low complexity). Residues 186–369 (LGMGMNYCVR…VHIDSHAEER (184 aa)) enclose the PID domain. The interval 370–525 (EDHEYYNEIP…HIKQQLWSEE (156 aa)) is CH1. Residue tyrosine 424 is modified to Phosphotyrosine. Polar residues-rich tracts occupy residues 471–486 (LQST…SAQP) and 502–513 (PGATAQPASSHS). Positions 471–514 (LQSTPGSAGNQRSAQPLGSPWHCGKAPETVQPGATAQPASSHSL) are disordered. Residues 526-617 (CYHGKLSRKA…GSEVSLKQPV (92 aa)) enclose the SH2 domain.

Interacts (via PID domain) with phosphorylated MUSK (via NPXY motif); undergoes tyrosine phosphorylation downstream of activated MUSK. Interacts with GRB2; the interaction is dependent of Tyr-424 phosphorylation and increased by EGF. Phosphorylated; the phosphorylation is enhanced by EGF. Phosphorylation at Tyr-424 is required for the interaction with GRB2. As to expression, only expressed in melanomas. Weakly expressed in normal melanocytes and benign nevi. Highly expressed at the transition from radial growth phase to vertical growth phase and metastatic melanomas, when tumor cells acquire migratory competence and invasive potential.

Its subcellular location is the postsynaptic cell membrane. In terms of biological role, activates both Ras-dependent and Ras-independent migratory pathways in melanomas. Contributes to the early phases of agrin-induced tyrosine phosphorylation of CHRNB1. This chain is SHC-transforming protein 4 (SHC4), found in Homo sapiens (Human).